The sequence spans 940 residues: Serine/threonine-protein phosphatase 1 regulatory subunit 10 (940 aa).

Residues 1–348 are interaction with TOX4; sequence MGSGPIDPKE…EPAPPSEAMD (348 aa). The TFIIS N-terminal domain maps to 73–147; the sequence is KLLNNWLTYS…SDWMAVIRSQ (75 aa). Disordered stretches follow at residues 147 to 211, 247 to 270, 304 to 400, and 533 to 905; these read QSST…FRST, SNVA…NTTP, KIKK…KSVT, and YVET…HGGD. Composition is skewed to basic and acidic residues over residues 153 to 166 and 174 to 196; these read AEKD…EGKS and PLTE…EKPK. Lysine 179 is covalently cross-linked (Glycyl lysine isopeptide (Lys-Gly) (interchain with G-Cter in SUMO2)). Threonine 256 is subject to Phosphothreonine. Lysine 262 participates in a covalent cross-link: Glycyl lysine isopeptide (Lys-Gly) (interchain with G-Cter in SUMO2). Serine 313 carries the phosphoserine modification. Positions 325–336 are enriched in low complexity; the sequence is KTSTEPSTAKPS. Positions 357–433 are necessary for interaction with PPP1CA; it reads PPVEVPELMD…NKIKDFGEAA (77 aa). Serine 382 carries the post-translational modification Phosphoserine. Positions 393-408 are necessary for interaction with PPP1CC; sequence GRKRKSVTWPEEGKLR. The short motif at 394 to 423 is the PP1-binding motif element; it reads RKRKSVTWPEEGKLREYFYFELDETERVNV. Serine 398 bears the Phosphoserine; by PKA mark. The segment at 418 to 619 is interaction with WDR82; sequence TERVNVNKIK…IKQMLVPHGL (202 aa). Composition is skewed to gly residues over residues 540 to 551 and 565 to 579; these read GGSGGSPDGAGG and MGAG…GGGI. Serine 545 is modified (phosphoserine). Polar residues predominate over residues 583–595; sequence EILTSIMGSPNSH. At serine 591 the chain carries Phosphoserine. The segment covering 596 to 611 has biased composition (basic and acidic residues); that stretch reads PSEELLKQPDYSDKIK. A compositionally biased stretch (pro residues) spans 644–655; it reads PPGPGGPMPGPH. The residue at position 665 (arginine 665) is an Omega-N-methylarginine. Residues 676–690 show a composition bias toward low complexity; it reads GDPFWDGPGDPMRGG. Arginine 693 carries the post-translational modification Omega-N-methylarginine. Pro residues predominate over residues 714–723; the sequence is EPPPPPPPPF. 2 stretches are compositionally biased toward gly residues: residues 726–764 and 790–845; these read ARGG…GMGN and SSMG…GSGG. At arginine 739 the chain carries Omega-N-methylarginine. Basic and acidic residues-rich tracts occupy residues 862–886 and 894–903; these read PHDV…HDGP and RGHDGGHSHG. The C3H1-type zinc finger occupies 906 to 934; that stretch reads MSNRPVCRHFMMKGNCRYENNCAFYHPGV.

Component of the PNUTS-PP1 complex (also named PTW/PP1 complex), composed of PPP1R10/PNUTS, TOX4, WDR82, and PPP1CA (or PPP1CB or PPP1CC). Phosphorylated on Ser-398 by PKA within the region necessary for interaction with PPP1CA.

Its subcellular location is the nucleus. The protein resides in the chromosome. Its function is as follows. Substrate-recognition component of the PNUTS-PP1 protein phosphatase complex, a protein phosphatase 1 (PP1) complex that promotes RNA polymerase II transcription pause-release, allowing transcription elongation. Promoter-proximal pausing by RNA polymerase II is a transcription halt following transcription initiation but prior to elongation, which acts as a checkpoint to control that transcripts are favorably configured for transcriptional elongation. The PNUTS-PP1 complex mediates the release of RNA polymerase II from promoter-proximal region of genes by catalyzing dephosphorylation of proteins involved in transcription, such as AFF4, CDK9, MEPCE, INTS12, NCBP1, POLR2M/GDOWN1 and SUPT6H. The PNUTS-PP1 complex also regulates RNA polymerase II transcription termination by mediating dephosphorylation of SUPT5H in termination zones downstream of poly(A) sites, thereby promoting deceleration of RNA polymerase II transcription. PNUTS-PP1 complex is also involved in the response to replication stress by mediating dephosphorylation of POLR2A at 'Ser-5' of the CTD, promoting RNA polymerase II degradation. The PNUTS-PP1 complex also plays a role in the control of chromatin structure and cell cycle progression during the transition from mitosis into interphase. PNUTS-PP1 complex mediates dephosphorylation of MYC, promoting MYC stability by preventing MYC ubiquitination by the SCF(FBXW7) complex. In addition to acts as a substrate-recognition component, PPP1R10/PNUTS also acts as a nuclear targeting subunit for the PNUTS-PP1 complex. In some context, PPP1R10/PNUTS also acts as an inhibitor of protein phosphatase 1 (PP1) activity by preventing access to substrates, such as RB. The polypeptide is Serine/threonine-protein phosphatase 1 regulatory subunit 10 (PPP1R10) (Macaca mulatta (Rhesus macaque)).